The sequence spans 655 residues: Methylenetetrahydrofolate reductase (NADPH) (655 aa).

The segment at 1–39 is disordered; that stretch reads MVNEPRGNGSPGPRWEGSSSGSESSRTSSRCSTPGLDPE. Residues S10, S18, S19, S20, S22, S24, S25, S28, and S29 each carry the phosphoserine modification. Low complexity predominate over residues 11–35; that stretch reads PGPRWEGSSSGSESSRTSSRCSTPG. T33 bears the Phosphothreonine mark. The active-site Proton donor/acceptor is E62. NAD(+)-binding positions include 62–67 and 93–94; these read EFFPPR and TW. T93 is subject to Phosphothreonine. 93-94 contributes to the FAD binding site; the sequence is TW. S102 is subject to Phosphoserine. Residues H126, 156-158, 173-174, Y196, 200-203, D209, and K216 contribute to the FAD site; these read RGD, YA, and HPEG. D158 contacts substrate. The substrate site is built by Q227, Y320, and R324. Phosphoserine is present on S393. T450 bears the Phosphothreonine mark. S-adenosyl-L-methionine-binding positions include N455, 460 to 463, 480 to 484, T559, and T572; these read AAET and TINSQ.

This sequence belongs to the methylenetetrahydrofolate reductase family. In terms of assembly, homodimer. Requires FAD as cofactor. In terms of processing, phosphorylation of an N-terminal serine-rich phosphorylation region increases sensitivity to S-adenosylmethionine and inhibition.

It catalyses the reaction (6S)-5-methyl-5,6,7,8-tetrahydrofolate + NADP(+) = (6R)-5,10-methylene-5,6,7,8-tetrahydrofolate + NADPH + H(+). Its pathway is one-carbon metabolism; tetrahydrofolate interconversion. Allosterically regulated by S-adenosylmethionine (SAM). Its function is as follows. Catalyzes the conversion of 5,10-methylenetetrahydrofolate to 5-methyltetrahydrofolate, a cosubstrate for homocysteine remethylation to methionine. Represents a key regulatory connection between the folate and methionine cycles. The chain is Methylenetetrahydrofolate reductase (NADPH) (MTHFR) from Bos taurus (Bovine).